Reading from the N-terminus, the 113-residue chain is UPF0060 membrane protein Arth_4423 (113 aa).

4 helical membrane passes run 7–27, 33–53, 62–82, and 91–111; these read VLLFILAAVAEIGGAWLVWQA, AWWWAGLGIIALGLYGFVATL, ILAAYGGVFVAGSLVWGMVFD, and VIGSVICLVGVAVIMFAPRGT.

The protein belongs to the UPF0060 family.

It is found in the cell membrane. This Arthrobacter sp. (strain FB24) protein is UPF0060 membrane protein Arth_4423.